The primary structure comprises 1904 residues: MATGGGPFEEGMNDQDLPSWSNESLDDRLNNTDWGCQQKKANRSSEKNKKKLGGEAETRLTNDISPESSPGMGRRKTRTPHSFPHARYMTQMSVPEQAELERLKQRINFSDLDQINTNKSKDPVSGSQKKESGEPLQCKELFGAALNKDFLQNGQLSIQEDGRGEPTMDSSQARDPQQEAKEELENLKKQHDLLKRMLQQQEQLKALQGRQAALLALQHKAEQAVAVVDDSVVTETTGSVSGVSLTSELNEELIDLIQRFHNQLHDSQTQSVPDNRRQAESLSLTREISQSRNSSVSEHQSDEKAQLFNKMRMLQGKKQKMDKLLGELHTLRDQHLNNSSFFPASSSPQRSIDQRSTTSAASAPVGVVTVINGESNSLASAPYPPDSLASQNESEEDDNLNPTEKLQKLNEVRKRLNELRELVHYYEQTSDMMTDAVNENTKEEEETEDSGSDSEHGDPQPVTNIRNPQGISSWSEINSNSNVQCGTNNRDGRHLNTDCEINNRSAANIRTLKMSSTLDCHNREDDKHADLPHGEDDEVEEDRASEDSMSSHRSSLGDVAGDAEFEQKINRLMAAKQKLRQLQNLAAMVQDDDPEPQVLTANASNMGDFLGEMEETKQQPNNVRVSTNKLQKDAGLNEKAREKFYEAKLQQQQRELKQLQEERRKLMEIQEKIEVLQKACPDLQSAGLGNSPANRQTSPATSTPAMNECNTAGKPLLEFGESVPVGNELWSEMRRHEILREELRRRRKQLEALMAEHQRRRELAETISTVAASVKSEGSEAQRTPQQSRTENRTMATWGGSTQCALDEEDGDEDGYLSDGLDQAEEEEDAPSMNDSFSAYPNNQIPESVYYLKGNKDRWKNCRPLSADGNYRPMSKTRQQQNISMRRQENFRWISELSYVEEKEQWQEQINQLKKQLEFSVSICQTLMQDQQTLSCFLQTLLAGPYNVVPNNVASSQVHLIMHQLNQCYTQLSWQQNNVQRLKQMLNDLMHQQEQQCQEKPSRKERGSSAPPPPSPVFCPFSFPPQPVNLFNIPGFTNISSFAPGINYNPVFPCGFGDFAHSGFPQSSEQQQHPLDHNASGKTEYMAFPKPFESSSSTGAENQRSHRQPEDEVEKRSTWLNDSQEVKKDDQSQQKAGFPVSVQSIASGHKNQSDTSRRRNFDEESLESFSSMPDPVDPTTVTKTFKSRKASAQASLASKDKTPKSKNKRKNSSQLKGRIKNTGYDSASASSVCEPCKSTKSKHSEEVVHAKVFSKKNREQLEKIIKYSRSTEMSSETGSDLSMFEALRDTIYSEVATLISQNESRPHFLIELFHELQLLNTDYLRQRALYALQDIVTRHLSENNEKGRCIKSLNTATWIASNSELTPSESLASTDDETFDKNFPTEACQDCEQNDADNGSTMSTSSHFEPFATDDLGNTVIHLDQALARMREYERMKIEAESTLDSEGCSSNLQGATAAKLEGPSTSECLSVPQSSEVSAVPCPRIDTQQLDRQIKAIMKEVIPFLKEHMDEVCSSQLLTSVRRMVLTLTQQNDESKEFVKFFHKQLGSILQDSLAKFAGRKLKDCGEDLLVEISEVLFNELAFFKLMQDLDNNSISVKQRCKRKIETTEEIQSYAKEDKDETETVKPVQGLETYDGNEVPESIKSDASDQEEDEESESGPVAISLSKAETQALTNYGSGEDENEDEEIEFEEGPVDVQTSLQASSETATENEQISSQELSKTKGSDILSSEQQSVNVKGEQDAATILPHYLNVVENTPPLPVNTPESFIAASMKTEESSSSLPGNETQMLDTACVVNKSSAGSSESSMAGSPDTESPVLVNEYEAGSGNVSQKSDEDDFVKVEDLPLKLAVYSEADLLKKIASEAQTNSLSDELLGGGGEQDRELVGDAQTLKEPETFGAQSA.

Disordered regions lie at residues Met-1–Pro-135, Gln-159–Glu-179, His-265–Glu-303, Asn-338–Ala-361, Asn-376–Gln-407, Ser-430–Asn-489, and Cys-520–Val-559. Residues Arg-43–Leu-60 show a composition bias toward basic and acidic residues. Positions Ile-107 to Asn-118 are enriched in polar residues. Residues Ser-171–Ala-212 adopt a coiled-coil conformation. Polar residues predominate over residues Glu-280–Glu-298. Residues Ser-301 to Gln-334 adopt a coiled-coil conformation. Low complexity predominate over residues Asn-338 to Pro-348. The span at Gln-349–Ala-361 shows a compositional bias: polar residues. Residues Thr-403–Thr-429 adopt a coiled-coil conformation. Positions Lys-442–Ser-452 are enriched in acidic residues. Positions Pro-461–Gly-470 are enriched in polar residues. Over residues Ile-471–Asn-482 the composition is skewed to low complexity. A compositionally biased stretch (basic and acidic residues) spans Cys-520–Gly-534. The span at Glu-535 to Ala-544 shows a compositional bias: acidic residues. 2 coiled-coil regions span residues Asp-562–Asp-592 and Leu-636–Ala-686. Positions Ala-686 to Met-706 are disordered. Over residues Gly-687–Met-706 the composition is skewed to polar residues. Positions Ser-731–Ser-768 form a coiled coil. The disordered stretch occupies residues Ser-773 to Tyr-840. A compositionally biased stretch (polar residues) spans Ser-779 to Cys-804. Acidic residues predominate over residues Leu-806–Ala-830. Coiled coils occupy residues Ser-895–Leu-927 and Thr-970–Lys-1000. Disordered regions lie at residues His-991 to Phe-1018, Gly-1063 to Lys-1082, and Phe-1088 to Asp-1225. 2 stretches are compositionally biased toward polar residues: residues Phe-1064–His-1073 and Glu-1093–Asn-1102. Over residues Gln-1103–Ser-1117 the composition is skewed to basic and acidic residues. Residues Ser-1141 to Lys-1150 are compositionally biased toward polar residues. Positions Asn-1151–Asp-1162 are enriched in basic and acidic residues. Positions Pro-1173–Thr-1182 are enriched in low complexity. A coiled-coil region spans residues Ile-1421–Glu-1447. Positions Ala-1616–Thr-1625 are enriched in basic and acidic residues. Disordered stretches follow at residues Ala-1616–Glu-1741, Met-1774–Asp-1838, and Glu-1865–Ala-1904. Residues Ser-1649–Glu-1658 are compositionally biased toward acidic residues. A compositionally biased stretch (polar residues) spans Lys-1668–Gly-1678. A compositionally biased stretch (acidic residues) spans Gly-1680–Pro-1695. Polar residues-rich tracts occupy residues Val-1698–Leu-1720, Ile-1728–Asn-1737, and Ser-1779–Leu-1791. Residues Ser-1800 to Ser-1812 are compositionally biased toward low complexity. The span at Glu-1881–Glu-1897 shows a compositional bias: basic and acidic residues.

It belongs to the PCM1 family. As to quaternary structure, self-associates.

Its subcellular location is the cytoplasm. It is found in the cytoskeleton. It localises to the microtubule organizing center. The protein localises to the centrosome. The protein resides in the cytoplasmic granule. Its subcellular location is the centriolar satellite. It is found in the cilium basal body. Functionally, required for centrosome assembly and function. Essential for the correct localization of several centrosomal proteins including CETN3 and PCNT. Required to anchor microtubules to the centrosome. Probably involved in the biogenesis of cilia. The sequence is that of Pericentriolar material 1 protein (PCM1) from Gallus gallus (Chicken).